Reading from the N-terminus, the 295-residue chain is MINQIQKTISVCIIGRPNSGKSTLLNRIIGEKLSIVTPKVQTTRSIITGIITLKDTQIILYDTPGIFEPKGMLEKAMVRCAWSSLYSADLVLSIIDSLKPLDDMAHNILNQFCLLNIVPIFLLNKIDIESKYLNDIKAFLKISHPKSLLFPISALCGKNVDVLLKYIKSKAKVSPWLYADDDITNLPMRFIAAEITREQLFLNLQQELPYKLTVQTEKFEELKDKSIKINQVIVISRESYKAIILGKNGTKIKDIGVKSRIQMEQLFCVPVHLFLFVKVHALWENKQEFYQYMKI.

Residues 7–176 (KTISVCIIGR…IKSKAKVSPW (170 aa)) form the Era-type G domain. A G1 region spans residues 15–22 (GRPNSGKS). Position 15 to 22 (15 to 22 (GRPNSGKS)) interacts with GTP. The tract at residues 41-45 (QTTRS) is G2. Positions 62 to 65 (DTPG) are G3. GTP is bound by residues 62–66 (DTPGI) and 124–127 (NKID). The tract at residues 124–127 (NKID) is G4. The tract at residues 152–154 (ISA) is G5. The KH type-2 domain occupies 204 to 281 (LQQELPYKLT…HLFLFVKVHA (78 aa)).

The protein belongs to the TRAFAC class TrmE-Era-EngA-EngB-Septin-like GTPase superfamily. Era GTPase family. In terms of assembly, monomer.

It localises to the cytoplasm. Its subcellular location is the cell inner membrane. Its function is as follows. An essential GTPase that binds both GDP and GTP, with rapid nucleotide exchange. Plays a role in 16S rRNA processing and 30S ribosomal subunit biogenesis and possibly also in cell cycle regulation and energy metabolism. The chain is GTPase Era from Rickettsia typhi (strain ATCC VR-144 / Wilmington).